The following is a 979-amino-acid chain: UPF0182 protein MT0070 (979 aa).

The next 7 membrane-spanning stretches (helical) occupy residues 19-41 (LVTAGMGMLALLLFGPRLVDIYV), 63-85 (LAIVAAVALVVAGIVLAALLLAY), 114-136 (LFGWGIAVTLGVVCGLIASFDWV), 174-196 (WLFVAVVLAFLASLLTHYLFGGL), 208-230 (AARVQLAVFAGAVVLLKAVAYWL), 261-280 (LVLVAIAVLCAVSFFTAIFL), and 285-307 (IPAMAAALLVLSAILVGGLWPLL). The interval 894–948 (VFGPGTGRVATXPGGDAASAPPPGAGGPAPPQGVPPPRTTQPPAAPPRGPDVPPA) is disordered. A compositionally biased stretch (pro residues) spans 913-946 (APPPGAGGPAPPQGVPPPRTTQPPAAPPRGPDVP).

The protein belongs to the UPF0182 family.

It is found in the cell membrane. The protein is UPF0182 protein MT0070 of Mycobacterium tuberculosis (strain CDC 1551 / Oshkosh).